The chain runs to 389 residues: Chorismate synthase (389 aa).

Residues arginine 40 and arginine 46 each contribute to the NADP(+) site. FMN is bound by residues 130 to 132 (RAS), 251 to 252 (QA), glycine 297, 312 to 316 (KPIST), and arginine 338.

It belongs to the chorismate synthase family. Homotetramer. FMNH2 serves as cofactor.

It catalyses the reaction 5-O-(1-carboxyvinyl)-3-phosphoshikimate = chorismate + phosphate. It participates in metabolic intermediate biosynthesis; chorismate biosynthesis; chorismate from D-erythrose 4-phosphate and phosphoenolpyruvate: step 7/7. Its function is as follows. Catalyzes the anti-1,4-elimination of the C-3 phosphate and the C-6 proR hydrogen from 5-enolpyruvylshikimate-3-phosphate (EPSP) to yield chorismate, which is the branch point compound that serves as the starting substrate for the three terminal pathways of aromatic amino acid biosynthesis. This reaction introduces a second double bond into the aromatic ring system. This Solibacter usitatus (strain Ellin6076) protein is Chorismate synthase.